The following is a 203-amino-acid chain: Holliday junction branch migration complex subunit RuvA (203 aa).

Residues 1–65 are domain I; it reads MIAYIHGKLL…EDAFDLYGFP (65 aa). Positions 66 to 144 are domain II; it reads CFDDREVFRT…TLKSATVRSG (79 aa). The segment at 145–155 is flexible linker; the sequence is ACPVEGDRSEF. The tract at residues 155–203 is domain III; sequence FLDALSGLRNLGYGDDEVRDFLKDIFDEEPDLDAGGAIRVALKKISQNK.

Belongs to the RuvA family. Homotetramer. Forms an RuvA(8)-RuvB(12)-Holliday junction (HJ) complex. HJ DNA is sandwiched between 2 RuvA tetramers; dsDNA enters through RuvA and exits via RuvB. An RuvB hexamer assembles on each DNA strand where it exits the tetramer. Each RuvB hexamer is contacted by two RuvA subunits (via domain III) on 2 adjacent RuvB subunits; this complex drives branch migration. In the full resolvosome a probable DNA-RuvA(4)-RuvB(12)-RuvC(2) complex forms which resolves the HJ.

The protein resides in the cytoplasm. Its function is as follows. The RuvA-RuvB-RuvC complex processes Holliday junction (HJ) DNA during genetic recombination and DNA repair, while the RuvA-RuvB complex plays an important role in the rescue of blocked DNA replication forks via replication fork reversal (RFR). RuvA specifically binds to HJ cruciform DNA, conferring on it an open structure. The RuvB hexamer acts as an ATP-dependent pump, pulling dsDNA into and through the RuvAB complex. HJ branch migration allows RuvC to scan DNA until it finds its consensus sequence, where it cleaves and resolves the cruciform DNA. The chain is Holliday junction branch migration complex subunit RuvA from Maridesulfovibrio salexigens (strain ATCC 14822 / DSM 2638 / NCIMB 8403 / VKM B-1763) (Desulfovibrio salexigens).